Reading from the N-terminus, the 248-residue chain is Aquaporin Z (248 aa).

The next 2 helical transmembrane spans lie at 11–31 (FIGT…AAAF) and 36–56 (IGFA…AFAI). The short motif at 65-67 (NPA) is the NPA 1 element. A run of 3 helical transmembrane segments spans residues 87 to 107 (IAAQ…IAGG), 132 to 152 (LLAC…IILG), and 161 to 181 (GFAP…SIPV). The NPA 2 motif lies at 187–189 (NPA). A helical transmembrane segment spans residues 203 to 223 (IAELWLFWLAPIVGAALAGLF).

It belongs to the MIP/aquaporin (TC 1.A.8) family. In terms of assembly, homotetramer.

The protein localises to the cell inner membrane. It carries out the reaction H2O(in) = H2O(out). Its function is as follows. Channel that permits osmotically driven movement of water in both directions. It is involved in the osmoregulation and in the maintenance of cell turgor during volume expansion in rapidly growing cells. It mediates rapid entry or exit of water in response to abrupt changes in osmolarity. The polypeptide is Aquaporin Z (Gloeobacter violaceus (strain ATCC 29082 / PCC 7421)).